A 245-amino-acid chain; its full sequence is 1-(5-phosphoribosyl)-5-[(5-phosphoribosylamino)methylideneamino] imidazole-4-carboxamide isomerase (245 aa).

Asp7 serves as the catalytic Proton acceptor. Asp129 functions as the Proton donor in the catalytic mechanism.

This sequence belongs to the HisA/HisF family.

It is found in the cytoplasm. The catalysed reaction is 1-(5-phospho-beta-D-ribosyl)-5-[(5-phospho-beta-D-ribosylamino)methylideneamino]imidazole-4-carboxamide = 5-[(5-phospho-1-deoxy-D-ribulos-1-ylimino)methylamino]-1-(5-phospho-beta-D-ribosyl)imidazole-4-carboxamide. It functions in the pathway amino-acid biosynthesis; L-histidine biosynthesis; L-histidine from 5-phospho-alpha-D-ribose 1-diphosphate: step 4/9. In Escherichia coli (strain 55989 / EAEC), this protein is 1-(5-phosphoribosyl)-5-[(5-phosphoribosylamino)methylideneamino] imidazole-4-carboxamide isomerase.